The primary structure comprises 510 residues: Probable RNA-binding protein 46 (510 aa).

The segment at 23-42 (ENGQRKFGGPPPGWEGPPPP) is disordered. Residues 31–42 (GPPPGWEGPPPP) show a composition bias toward pro residues. 3 RRM domains span residues 45–123 (REVF…VSLD), 125–207 (CRLF…WAEP), and 220–292 (RVLY…LAKP).

In terms of tissue distribution, expressed in the testis and ovary.

The protein resides in the cytoplasm. Essential for male and female fertility, playing a crucial role in regulating germ cell development by ensuring the proper progression of meiosis prophase I. This is Probable RNA-binding protein 46 (rbm46) from Danio rerio (Zebrafish).